The sequence spans 375 residues: MTVIAAEAIGVAHERAEDYAGLSIEELDQRIATAKAKLGERLVILGHHYQRDDVVKHADLSGDSYGLSVDARKTAAEYIVFCGVHFMAESADILGRDDQTVILPDHTAGCSMADMADIEQLEEVWDELDEILGDAEAQVMPITYVNSSAAVKAFVGEHGGACCTSSNAEPIVRWAKNLRPKMLFLPDQHLGRYTAFAKLGIPLDKMLVWNPNLRYGGHTPEAIREAEVLLWAGHCSVHAQFRPAYIKAWREKHPEINVIVHPECTLGVTNEADYVGSTAYIIKTINEAPAGSMWAVGTEINLVNRLQTNNPDKTIVSVSPFACLCSTMYRIDPEELCWVLENLVEGNVVNQIAVPTAIKQKARLALERMLEIAGN.

Residues H47 and S64 each contribute to the iminosuccinate site. Residue C110 coordinates [4Fe-4S] cluster. Residues 144–146 (YVN) and S165 each bind iminosuccinate. C235 lines the [4Fe-4S] cluster pocket. Iminosuccinate is bound by residues 261–263 (HPE) and T278. C325 contributes to the [4Fe-4S] cluster binding site.

Belongs to the quinolinate synthase family. Type 3 subfamily. [4Fe-4S] cluster serves as cofactor.

It is found in the cytoplasm. It catalyses the reaction iminosuccinate + dihydroxyacetone phosphate = quinolinate + phosphate + 2 H2O + H(+). It functions in the pathway cofactor biosynthesis; NAD(+) biosynthesis; quinolinate from iminoaspartate: step 1/1. Its function is as follows. Catalyzes the condensation of iminoaspartate with dihydroxyacetone phosphate to form quinolinate. This is Quinolinate synthase from Herpetosiphon aurantiacus (strain ATCC 23779 / DSM 785 / 114-95).